A 445-amino-acid polypeptide reads, in one-letter code: Tubulin beta-1 chain (445 aa).

Residues Q11, E69, S138, G142, T143, G144, N204, and N226 each contribute to the GTP site. E69 is a binding site for Mg(2+). Positions 422–445 (QYQDAGMDDEYGEEYEDEAPAEEE) are disordered. The segment covering 427–445 (GMDDEYGEEYEDEAPAEEE) has biased composition (acidic residues).

This sequence belongs to the tubulin family. In terms of assembly, dimer of alpha and beta chains. A typical microtubule is a hollow water-filled tube with an outer diameter of 25 nm and an inner diameter of 15 nM. Alpha-beta heterodimers associate head-to-tail to form protofilaments running lengthwise along the microtubule wall with the beta-tubulin subunit facing the microtubule plus end conferring a structural polarity. Microtubules usually have 13 protofilaments but different protofilament numbers can be found in some organisms and specialized cells. Requires Mg(2+) as cofactor.

It localises to the cytoplasm. The protein localises to the cytoskeleton. Functionally, tubulin is the major constituent of microtubules, a cylinder consisting of laterally associated linear protofilaments composed of alpha- and beta-tubulin heterodimers. Microtubules grow by the addition of GTP-tubulin dimers to the microtubule end, where a stabilizing cap forms. Below the cap, tubulin dimers are in GDP-bound state, owing to GTPase activity of alpha-tubulin. The chain is Tubulin beta-1 chain (TUB1) from Colletotrichum graminicola (Maize anthracnose fungus).